The primary structure comprises 308 residues: Aspartate carbamoyltransferase catalytic subunit (308 aa).

Arg-55 and Thr-56 together coordinate carbamoyl phosphate. Residue Lys-83 coordinates L-aspartate. 3 residues coordinate carbamoyl phosphate: Arg-105, His-133, and Gln-136. L-aspartate contacts are provided by Arg-166 and Arg-220. Residues Gly-261 and Pro-262 each contribute to the carbamoyl phosphate site.

The protein belongs to the aspartate/ornithine carbamoyltransferase superfamily. ATCase family. Heterododecamer (2C3:3R2) of six catalytic PyrB chains organized as two trimers (C3), and six regulatory PyrI chains organized as three dimers (R2).

The catalysed reaction is carbamoyl phosphate + L-aspartate = N-carbamoyl-L-aspartate + phosphate + H(+). The protein operates within pyrimidine metabolism; UMP biosynthesis via de novo pathway; (S)-dihydroorotate from bicarbonate: step 2/3. In terms of biological role, catalyzes the condensation of carbamoyl phosphate and aspartate to form carbamoyl aspartate and inorganic phosphate, the committed step in the de novo pyrimidine nucleotide biosynthesis pathway. The polypeptide is Aspartate carbamoyltransferase catalytic subunit (Chlorobaculum tepidum (strain ATCC 49652 / DSM 12025 / NBRC 103806 / TLS) (Chlorobium tepidum)).